A 275-amino-acid polypeptide reads, in one-letter code: 4-hydroxy-tetrahydrodipicolinate reductase (275 aa).

NAD(+) is bound by residues 13 to 18 (GAAGKM) and 108 to 110 (GTT). H164 acts as the Proton donor/acceptor in catalysis. Residue H165 coordinates (S)-2,3,4,5-tetrahydrodipicolinate. K168 functions as the Proton donor in the catalytic mechanism. 174–175 (GT) provides a ligand contact to (S)-2,3,4,5-tetrahydrodipicolinate.

This sequence belongs to the DapB family.

The protein resides in the cytoplasm. The catalysed reaction is (S)-2,3,4,5-tetrahydrodipicolinate + NAD(+) + H2O = (2S,4S)-4-hydroxy-2,3,4,5-tetrahydrodipicolinate + NADH + H(+). It catalyses the reaction (S)-2,3,4,5-tetrahydrodipicolinate + NADP(+) + H2O = (2S,4S)-4-hydroxy-2,3,4,5-tetrahydrodipicolinate + NADPH + H(+). It participates in amino-acid biosynthesis; L-lysine biosynthesis via DAP pathway; (S)-tetrahydrodipicolinate from L-aspartate: step 4/4. In terms of biological role, catalyzes the conversion of 4-hydroxy-tetrahydrodipicolinate (HTPA) to tetrahydrodipicolinate. This Rippkaea orientalis (strain PCC 8801 / RF-1) (Cyanothece sp. (strain PCC 8801)) protein is 4-hydroxy-tetrahydrodipicolinate reductase.